Reading from the N-terminus, the 450-residue chain is Crinkler effector protein 63 (450 aa).

The N-terminal stretch at 1–17 is a signal peptide; it reads MVKLFCAIVGAAGSAFP. An LQLFLAK domain region spans residues 18 to 55; sequence VDIDAGQSAGDLKDAIKAKNPATITCDAKDLQLSLAKT. Residues 58–117 form a DWL domain region; it reads GAWLPDDDQAALDLEDGKVHEDIQALIDGEKMKATWTIEDVLTANNMTKRKGRAPKSRQI. An N-linked (GlcNAc...) asparagine glycan is attached at Asn-103. Positions 118–124 match the HVLVXXP motif motif; the sequence is HVLVVVP. Residues 125–450 form an effector domain region; sequence EGAFGSASET…RSIPTFSYFS (326 aa). The Nuclear localization signal (NLS) motif lies at 218–224; the sequence is QRKRYRR. Residue Asn-342 is glycosylated (N-linked (GlcNAc...) asparagine).

Belongs to the Crinkler effector family. As to quaternary structure, forms a homodimer via an inverted association manner. Forms heterodimers with CRN79 and CRN115.

Its subcellular location is the secreted. It localises to the host nucleus. The protein localises to the host nucleoplasm. In terms of biological role, secreted effector that, with CRN115, is critical to pathogenesis by modulating host defenses. Induces cell death in plant host cells. Suppresses callose deposition and affects expression of defense-related genes including two salicylic acid (SA) signal-induced and antimicrobial PR genes (PR1 and PR2), and genes involved in jasmonic acid (JA)/ethylene (ET)-mediated defense pathway (ERF1, ORA59, PDF1.2). CRN115 and CRN63 may share the same molecular host targets that are involved in the cell death signal transduction pathway and that their differential activities are dependent on plant nuclear localization or not. Does not affect MAPK activation and BIK1 phosphorylation and acts downstream of the MAPK cascades in PTI signaling. This is Crinkler effector protein 63 from Phytophthora sojae (strain P6497) (Soybean stem and root rot agent).